The sequence spans 232 residues: Ribose-5-phosphate isomerase A (232 aa).

Substrate-binding positions include 28–31, 83–86, and 96–99; these read TGST, DGAD, and KGGG. Glu-105 serves as the catalytic Proton acceptor. Lys-123 contacts substrate.

The protein belongs to the ribose 5-phosphate isomerase family. In terms of assembly, homodimer.

It carries out the reaction aldehydo-D-ribose 5-phosphate = D-ribulose 5-phosphate. It participates in carbohydrate degradation; pentose phosphate pathway; D-ribose 5-phosphate from D-ribulose 5-phosphate (non-oxidative stage): step 1/1. Its function is as follows. Catalyzes the reversible conversion of ribose-5-phosphate to ribulose 5-phosphate. This is Ribose-5-phosphate isomerase A from Rhizobium leguminosarum bv. trifolii (strain WSM2304).